The following is a 498-amino-acid chain: Protein WHAT'S THIS FACTOR 1, chloroplastic (498 aa).

The N-terminal 50 residues, 1-50 (MDAKLLLPFPFAPAAATRSPKSLFLGAPLPPPPRPPPFPLRLRPRPAAVV), are a transit peptide targeting the chloroplast. The 329-residue stretch at 59-387 (KEAPFDTVIQ…LKEKMRALVA (329 aa)) folds into the PORR domain. 2 disordered regions span residues 397 to 427 (VGTGEEAEGMNGSLQSRDQVSDEEYDDEDEG) and 446 to 498 (DYEW…RERW). Composition is skewed to acidic residues over residues 417 to 427 (SDEEYDDEDEG) and 456 to 466 (ENDDSPPDFGD).

The protein resides in the plastid. It is found in the chloroplast. RNA-binding protein involved in the chloroplastic group II intron splicing. Binds specific group II introns and promotes their splicing. Functions in the context of a heterodimer with the ribonuclease III domain-containing protein RNC1. In Zea mays (Maize), this protein is Protein WHAT'S THIS FACTOR 1, chloroplastic.